A 287-amino-acid chain; its full sequence is MINLRQQMPHYLRLMRFDKPVGIFLLLWPTLWAVWIAAKGAPSFKIAVIFIAGSVVMRAAGCIVNDFADRHLDKHVQRTQMRPLASGSVSVTEAMLLFAVLSLIAFTLVLLLNRLTVELAVIGILLALVYPFLKRFTHLPQLWLGVAFSWSIPMAFAATVGHVPAVAWLLFFAAVLWPIVYDTQYAMIDREDDVKVGIKSTAILFGRYDRLMIGLLQGSVLLTFGLLGWYLRFNYWFYLGLLVALGLMCYQQFLIRHRKPPDCFAAFRNNNWVGFFIFLGILLTYRN.

9 consecutive transmembrane segments (helical) span residues 21–41 (VGIF…AKGA), 44–64 (FKIA…GCIV), 91–111 (VTEA…LVLL), 112–132 (LNRL…VYPF), 139–159 (LPQL…FAAT), 160–180 (VGHV…WPIV), 211–231 (LMIG…GWYL), 235–255 (YWFY…QFLI), and 263–283 (CFAA…GILL).

This sequence belongs to the UbiA prenyltransferase family. Mg(2+) serves as cofactor.

It is found in the cell inner membrane. The enzyme catalyses all-trans-octaprenyl diphosphate + 4-hydroxybenzoate = 4-hydroxy-3-(all-trans-octaprenyl)benzoate + diphosphate. Its pathway is cofactor biosynthesis; ubiquinone biosynthesis. Functionally, catalyzes the prenylation of para-hydroxybenzoate (PHB) with an all-trans polyprenyl group. Mediates the second step in the final reaction sequence of ubiquinone-8 (UQ-8) biosynthesis, which is the condensation of the polyisoprenoid side chain with PHB, generating the first membrane-bound Q intermediate 3-octaprenyl-4-hydroxybenzoate. The protein is 4-hydroxybenzoate octaprenyltransferase of Coxiella burnetii (strain CbuG_Q212) (Coxiella burnetii (strain Q212)).